The following is a 382-amino-acid chain: 8-amino-7-oxononanoate synthase (382 aa).

Arginine 26 contacts substrate. Glycine 104–tyrosine 105 is a pyridoxal 5'-phosphate binding site. Histidine 129 contributes to the substrate binding site. Residues serine 175, aspartate 200–histidine 203, and threonine 232–lysine 235 contribute to the pyridoxal 5'-phosphate site. Lysine 235 bears the N6-(pyridoxal phosphate)lysine mark. Threonine 345 contributes to the substrate binding site.

Belongs to the class-II pyridoxal-phosphate-dependent aminotransferase family. BioF subfamily. Homodimer. It depends on pyridoxal 5'-phosphate as a cofactor.

It catalyses the reaction 6-carboxyhexanoyl-[ACP] + L-alanine + H(+) = (8S)-8-amino-7-oxononanoate + holo-[ACP] + CO2. It participates in cofactor biosynthesis; biotin biosynthesis. Its function is as follows. Catalyzes the decarboxylative condensation of pimeloyl-[acyl-carrier protein] and L-alanine to produce 8-amino-7-oxononanoate (AON), [acyl-carrier protein], and carbon dioxide. The sequence is that of 8-amino-7-oxononanoate synthase from Mycobacterium sp. (strain JLS).